Consider the following 170-residue polypeptide: ATP synthase subunit b (170 aa).

The helical transmembrane segment at 15-37 (GDILFQLLAMLILLALLKKYALG) threads the bilayer.

It belongs to the ATPase B chain family. As to quaternary structure, F-type ATPases have 2 components, F(1) - the catalytic core - and F(0) - the membrane proton channel. F(1) has five subunits: alpha(3), beta(3), gamma(1), delta(1), epsilon(1). F(0) has three main subunits: a(1), b(2) and c(10-14). The alpha and beta chains form an alternating ring which encloses part of the gamma chain. F(1) is attached to F(0) by a central stalk formed by the gamma and epsilon chains, while a peripheral stalk is formed by the delta and b chains. The F(1)F(0) complex interacts with SpoIIIJ and YqjG; YqgA is found in the same complex.

Its subcellular location is the cell membrane. Functionally, f(1)F(0) ATP synthase produces ATP from ADP in the presence of a proton or sodium gradient. F-type ATPases consist of two structural domains, F(1) containing the extramembraneous catalytic core and F(0) containing the membrane proton channel, linked together by a central stalk and a peripheral stalk. During catalysis, ATP synthesis in the catalytic domain of F(1) is coupled via a rotary mechanism of the central stalk subunits to proton translocation. Component of the F(0) channel, it forms part of the peripheral stalk, linking F(1) to F(0). This chain is ATP synthase subunit b, found in Bacillus subtilis (strain 168).